The primary structure comprises 203 residues: ATP-dependent Clp protease proteolytic subunit (203 aa).

Ser-107 (nucleophile) is an active-site residue. His-132 is a catalytic residue.

Belongs to the peptidase S14 family. In terms of assembly, fourteen ClpP subunits assemble into 2 heptameric rings which stack back to back to give a disk-like structure with a central cavity, resembling the structure of eukaryotic proteasomes.

Its subcellular location is the cytoplasm. It catalyses the reaction Hydrolysis of proteins to small peptides in the presence of ATP and magnesium. alpha-casein is the usual test substrate. In the absence of ATP, only oligopeptides shorter than five residues are hydrolyzed (such as succinyl-Leu-Tyr-|-NHMec, and Leu-Tyr-Leu-|-Tyr-Trp, in which cleavage of the -Tyr-|-Leu- and -Tyr-|-Trp bonds also occurs).. Cleaves peptides in various proteins in a process that requires ATP hydrolysis. Has a chymotrypsin-like activity. Plays a major role in the degradation of misfolded proteins. This is ATP-dependent Clp protease proteolytic subunit from Shewanella halifaxensis (strain HAW-EB4).